The primary structure comprises 193 residues: Large ribosomal subunit protein uL5 (193 aa).

Belongs to the universal ribosomal protein uL5 family. As to quaternary structure, part of the 50S ribosomal subunit; part of the 5S rRNA/L5/L18/L25 subcomplex. Contacts the 5S rRNA and the P site tRNA. Forms a bridge to the 30S subunit in the 70S ribosome.

In terms of biological role, this is one of the proteins that bind and probably mediate the attachment of the 5S RNA into the large ribosomal subunit, where it forms part of the central protuberance. In the 70S ribosome it contacts protein S13 of the 30S subunit (bridge B1b), connecting the 2 subunits; this bridge is implicated in subunit movement. Contacts the P site tRNA; the 5S rRNA and some of its associated proteins might help stabilize positioning of ribosome-bound tRNAs. This chain is Large ribosomal subunit protein uL5, found in Corynebacterium urealyticum (strain ATCC 43042 / DSM 7109).